The following is a 620-amino-acid chain: LEAF RUST 10 DISEASE-RESISTANCE LOCUS RECEPTOR-LIKE PROTEIN KINASE-like 2.3 (620 aa).

The first 30 residues, 1-30 (MDSLSSMGFQTASFFLILLFLFYHLPCVPS), serve as a signal peptide directing secretion. The Extracellular segment spans residues 31–256 (QQERSRLCKP…NNGTYSDNRP (226 aa)). Asn-75, Asn-85, Asn-93, Asn-132, Asn-148, Asn-162, Asn-189, Asn-231, and Asn-248 each carry an N-linked (GlcNAc...) asparagine glycan. Residues 257-277 (FLVTIGTVLGSILCVCVVLFL) form a helical membrane-spanning segment. Residues 278 to 620 (AFYLNERRIA…SVESSIYSEV (343 aa)) are Cytoplasmic-facing. The Protein kinase domain occupies 314–596 (KSFTEVVGRG…SLDPPPKPLL (283 aa)). ATP-binding positions include 320 to 328 (VGRGGFGTV) and Lys-342. Catalysis depends on Asp-431, which acts as the Proton acceptor. Residues 586 to 620 (DSLDPPPKPLLHMPMQNNNAESSQLSVESSIYSEV) form a disordered region. A compositionally biased stretch (polar residues) spans 600-620 (MQNNNAESSQLSVESSIYSEV).

It belongs to the protein kinase superfamily. Ser/Thr protein kinase family.

It is found in the membrane. The enzyme catalyses L-seryl-[protein] + ATP = O-phospho-L-seryl-[protein] + ADP + H(+). It carries out the reaction L-threonyl-[protein] + ATP = O-phospho-L-threonyl-[protein] + ADP + H(+). This chain is LEAF RUST 10 DISEASE-RESISTANCE LOCUS RECEPTOR-LIKE PROTEIN KINASE-like 2.3, found in Arabidopsis thaliana (Mouse-ear cress).